A 234-amino-acid polypeptide reads, in one-letter code: Biosynthetic peptidoglycan transglycosylase (234 aa).

A helical membrane pass occupies residues 11–31 (RFLLFAMLGFVGLSVLLVLVF).

It belongs to the glycosyltransferase 51 family.

The protein localises to the cell inner membrane. The enzyme catalyses [GlcNAc-(1-&gt;4)-Mur2Ac(oyl-L-Ala-gamma-D-Glu-L-Lys-D-Ala-D-Ala)](n)-di-trans,octa-cis-undecaprenyl diphosphate + beta-D-GlcNAc-(1-&gt;4)-Mur2Ac(oyl-L-Ala-gamma-D-Glu-L-Lys-D-Ala-D-Ala)-di-trans,octa-cis-undecaprenyl diphosphate = [GlcNAc-(1-&gt;4)-Mur2Ac(oyl-L-Ala-gamma-D-Glu-L-Lys-D-Ala-D-Ala)](n+1)-di-trans,octa-cis-undecaprenyl diphosphate + di-trans,octa-cis-undecaprenyl diphosphate + H(+). Its pathway is cell wall biogenesis; peptidoglycan biosynthesis. Peptidoglycan polymerase that catalyzes glycan chain elongation from lipid-linked precursors. The sequence is that of Biosynthetic peptidoglycan transglycosylase from Chromohalobacter salexigens (strain ATCC BAA-138 / DSM 3043 / CIP 106854 / NCIMB 13768 / 1H11).